The primary structure comprises 158 residues: Transcription elongation factor GreA (158 aa).

The stretch at 47–74 (AEYHAAKEEQSHNEGRINELEDKLARAD) forms a coiled coil.

Belongs to the GreA/GreB family.

Functionally, necessary for efficient RNA polymerase transcription elongation past template-encoded arresting sites. The arresting sites in DNA have the property of trapping a certain fraction of elongating RNA polymerases that pass through, resulting in locked ternary complexes. Cleavage of the nascent transcript by cleavage factors such as GreA or GreB allows the resumption of elongation from the new 3'terminus. GreA releases sequences of 2 to 3 nucleotides. This chain is Transcription elongation factor GreA, found in Rhodopseudomonas palustris (strain ATCC BAA-98 / CGA009).